Here is a 132-residue protein sequence, read N- to C-terminus: Small ribosomal subunit protein uS8c (132 aa).

The protein belongs to the universal ribosomal protein uS8 family. As to quaternary structure, part of the 30S ribosomal subunit.

It localises to the plastid. Its subcellular location is the chloroplast. Its function is as follows. One of the primary rRNA binding proteins, it binds directly to 16S rRNA central domain where it helps coordinate assembly of the platform of the 30S subunit. This chain is Small ribosomal subunit protein uS8c (rps8), found in Thalassiosira pseudonana (Marine diatom).